Consider the following 183-residue polypeptide: Alkyl hydroperoxide reductase AhpD (183 aa).

Cysteine 132 (proton donor) is an active-site residue. An intrachain disulfide couples cysteine 132 to cysteine 135. Catalysis depends on cysteine 135, which acts as the Cysteine sulfenic acid (-SOH) intermediate.

This sequence belongs to the AhpD family.

It catalyses the reaction N(6)-[(R)-dihydrolipoyl]-L-lysyl-[lipoyl-carrier protein] + a hydroperoxide = N(6)-[(R)-lipoyl]-L-lysyl-[lipoyl-carrier protein] + an alcohol + H2O. In terms of biological role, antioxidant protein with alkyl hydroperoxidase activity. Required for the reduction of the AhpC active site cysteine residues and for the regeneration of the AhpC enzyme activity. In Acidobacterium capsulatum (strain ATCC 51196 / DSM 11244 / BCRC 80197 / JCM 7670 / NBRC 15755 / NCIMB 13165 / 161), this protein is Alkyl hydroperoxide reductase AhpD.